A 188-amino-acid polypeptide reads, in one-letter code: Pyridoxal 5'-phosphate synthase subunit PdxT (188 aa).

Residue 46–48 (GES) participates in L-glutamine binding. Cysteine 78 (nucleophile) is an active-site residue. Residues arginine 105 and 134–135 (IR) each bind L-glutamine. Active-site charge relay system residues include histidine 170 and glutamate 172.

It belongs to the glutaminase PdxT/SNO family. In the presence of PdxS, forms a dodecamer of heterodimers. Only shows activity in the heterodimer.

The catalysed reaction is aldehydo-D-ribose 5-phosphate + D-glyceraldehyde 3-phosphate + L-glutamine = pyridoxal 5'-phosphate + L-glutamate + phosphate + 3 H2O + H(+). The enzyme catalyses L-glutamine + H2O = L-glutamate + NH4(+). It participates in cofactor biosynthesis; pyridoxal 5'-phosphate biosynthesis. Catalyzes the hydrolysis of glutamine to glutamate and ammonia as part of the biosynthesis of pyridoxal 5'-phosphate. The resulting ammonia molecule is channeled to the active site of PdxS. The protein is Pyridoxal 5'-phosphate synthase subunit PdxT of Clostridium kluyveri (strain ATCC 8527 / DSM 555 / NBRC 12016 / NCIMB 10680 / K1).